A 209-amino-acid chain; its full sequence is uncharacterized protein (209 aa).

Residues 1-11 (MMRTNAGKETK) are compositionally biased toward basic and acidic residues. The tract at residues 1–20 (MMRTNAGKETKGYNPAPADS) is disordered.

This is an uncharacterized protein from Caenorhabditis elegans.